We begin with the raw amino-acid sequence, 277 residues long: 2,3,4,5-tetrahydropyridine-2,6-dicarboxylate N-succinyltransferase (277 aa).

The substrate site is built by arginine 106 and aspartate 143.

This sequence belongs to the transferase hexapeptide repeat family. In terms of assembly, homotrimer.

It localises to the cytoplasm. It carries out the reaction (S)-2,3,4,5-tetrahydrodipicolinate + succinyl-CoA + H2O = (S)-2-succinylamino-6-oxoheptanedioate + CoA. The protein operates within amino-acid biosynthesis; L-lysine biosynthesis via DAP pathway; LL-2,6-diaminopimelate from (S)-tetrahydrodipicolinate (succinylase route): step 1/3. The sequence is that of 2,3,4,5-tetrahydropyridine-2,6-dicarboxylate N-succinyltransferase from Variovorax paradoxus (strain S110).